The sequence spans 382 residues: Alanine racemase 1 (382 aa).

Lys-39 functions as the Proton acceptor; specific for D-alanine in the catalytic mechanism. The residue at position 39 (Lys-39) is an N6-(pyridoxal phosphate)lysine. Substrate is bound at residue Arg-138. Tyr-265 serves as the catalytic Proton acceptor; specific for L-alanine. Met-312 contributes to the substrate binding site.

Belongs to the alanine racemase family. Requires pyridoxal 5'-phosphate as cofactor.

It catalyses the reaction L-alanine = D-alanine. It functions in the pathway amino-acid biosynthesis; D-alanine biosynthesis; D-alanine from L-alanine: step 1/1. Functionally, catalyzes the interconversion of L-alanine and D-alanine. May also act on other amino acids. This Staphylococcus aureus (strain NCTC 8325 / PS 47) protein is Alanine racemase 1 (alr1).